We begin with the raw amino-acid sequence, 925 residues long: Alanine--tRNA ligase (925 aa).

The Zn(2+) site is built by His611, His615, Cys714, and His718.

It belongs to the class-II aminoacyl-tRNA synthetase family. Zn(2+) serves as cofactor.

It is found in the cytoplasm. It carries out the reaction tRNA(Ala) + L-alanine + ATP = L-alanyl-tRNA(Ala) + AMP + diphosphate. Functionally, catalyzes the attachment of alanine to tRNA(Ala) in a two-step reaction: alanine is first activated by ATP to form Ala-AMP and then transferred to the acceptor end of tRNA(Ala). Also edits incorrectly charged Ser-tRNA(Ala) and Gly-tRNA(Ala) via its editing domain. This chain is Alanine--tRNA ligase, found in Methanosarcina acetivorans (strain ATCC 35395 / DSM 2834 / JCM 12185 / C2A).